The chain runs to 410 residues: MKMEQALNITSEIGKLQTVLVKRPGSELENITPEYLESLLFDDIPYLKMMQKEHDFFAKTMKDSNIEVLYLEKLAAEALREANNKESFLTKMIKESNQMDESALYVRDYLMSFDEEEMIRKLMSGLKKSEIPERKKKHLNEMMDEQYPFFLDPLPNLYFTRDPAAVIGNGVTINRMFQPARRRESMFIELILKHHPRFSNQEIPVWSGRGEPFSLEGGDELVLNEETVLVGVSERTDARAVERLAESLFSRSPKIKRVLAVEIPETRSFMHLDTVFTMVNFAQFTIHPAIQNQQGELNIYILEKSENGLEITPRRDFQRVIAEVLDEPEIDFIPCGGEDVIVSAREQWNDGANTLAIAPGEVITYDRNQVSNDLLRSAGIKVHEVISSELSRGRGGPRCMTMPLVRENLK.

Catalysis depends on C399, which acts as the Amidino-cysteine intermediate.

It belongs to the arginine deiminase family.

The protein localises to the cytoplasm. The enzyme catalyses L-arginine + H2O = L-citrulline + NH4(+). Its pathway is amino-acid degradation; L-arginine degradation via ADI pathway; carbamoyl phosphate from L-arginine: step 1/2. The polypeptide is Arginine deiminase (Listeria monocytogenes serotype 4b (strain F2365)).